The sequence spans 404 residues: MKLPIYLDYAATCPVDERVAKKMMAFLTIDGTFGNPASRSHKFGWQAEEAVDIARNQIADLIGADSREIVFTSGATESDNLAIKGAAHFYQTKGKHIITCKTEHKAVLDTCRQLEREGFEVTYLSPEADGLIDLEKFKAALRPDTILASIMHANNEIGVLQDIKAIGELCRANKTIFHVDATQSVGKVEINLEELAVDLMSMSSHKLYGPKGVGALYVRRKPRVRLEAIIHGGGHERGMRSGTLPVHQIVGMGEAYRIAKEEMASEMPRLKALRDRLYNGLKDIEETYVNGSMEHRLDSNLNISFNYVEGESLMMALRDIAVSSGSACTSASLEPSYVLRALGLNDELAHSSIRFTLGRYTTEEEIDYTINLMKGAVEKLRALSPLWDMFKEGIDLNTIEWSAH.

Pyridoxal 5'-phosphate is bound by residues 75-76 (AT), N155, Q183, and 203-205 (SSH). N6-(pyridoxal phosphate)lysine is present on K206. T243 lines the pyridoxal 5'-phosphate pocket. The active-site Cysteine persulfide intermediate is C328. C328 is a [2Fe-2S] cluster binding site.

This sequence belongs to the class-V pyridoxal-phosphate-dependent aminotransferase family. NifS/IscS subfamily. In terms of assembly, homodimer. Forms a heterotetramer with IscU, interacts with other sulfur acceptors. It depends on pyridoxal 5'-phosphate as a cofactor.

It is found in the cytoplasm. The enzyme catalyses (sulfur carrier)-H + L-cysteine = (sulfur carrier)-SH + L-alanine. It functions in the pathway cofactor biosynthesis; iron-sulfur cluster biosynthesis. Functionally, master enzyme that delivers sulfur to a number of partners involved in Fe-S cluster assembly, tRNA modification or cofactor biosynthesis. Catalyzes the removal of elemental sulfur atoms from cysteine to produce alanine. Functions as a sulfur delivery protein for Fe-S cluster synthesis onto IscU, an Fe-S scaffold assembly protein, as well as other S acceptor proteins. The chain is Cysteine desulfurase IscS from Haemophilus influenzae (strain PittGG).